Reading from the N-terminus, the 463-residue chain is Methionine aminopeptidase 2-2 (463 aa).

A disordered region spans residues 1-97 (MGSKSPEGHW…TLSVTELKQT (97 aa)). The segment covering 27–36 (DPQTSQNGSG) has biased composition (polar residues). The span at 46–57 (GDDDDDDEDAEE) shows a compositional bias: acidic residues. Positions 69–85 (KKKKRKKSNKKKKKKTK) are enriched in basic residues. The segment covering 86-97 (SGTLSVTELKQT) has biased composition (polar residues). H215 provides a ligand contact to substrate. 3 residues coordinate a divalent metal cation: D236, D247, and H316. H324 is a binding site for substrate. Residues E349 and E444 each coordinate a divalent metal cation.

It belongs to the peptidase M24A family. Methionine aminopeptidase eukaryotic type 2 subfamily. It depends on Co(2+) as a cofactor. Requires Zn(2+) as cofactor. Mn(2+) serves as cofactor. Fe(2+) is required as a cofactor.

The protein resides in the cytoplasm. The enzyme catalyses Release of N-terminal amino acids, preferentially methionine, from peptides and arylamides.. Cotranslationally removes the N-terminal methionine from nascent proteins. The N-terminal methionine is often cleaved when the second residue in the primary sequence is small and uncharged (Met-Ala-, Cys, Gly, Pro, Ser, Thr, or Val). The polypeptide is Methionine aminopeptidase 2-2 (Neosartorya fischeri (strain ATCC 1020 / DSM 3700 / CBS 544.65 / FGSC A1164 / JCM 1740 / NRRL 181 / WB 181) (Aspergillus fischerianus)).